The sequence spans 94 residues: MTGGISPHPINATPEIQEITNTVKEQLEKKLGTNYSIFQAISYKKQLVNGMNYFIKVKTDNGYDHIRVYEAFKGTPNLVSVQQHKSLEDDITYF.

Positions 46–50 (QLVNG) match the Secondary area of contact motif.

It belongs to the cystatin family.

The protein localises to the cytoplasm. Functionally, intracellular thiol proteinase inhibitor. This chain is Cystatin-A3 (cpiC), found in Dictyostelium discoideum (Social amoeba).